A 77-amino-acid polypeptide reads, in one-letter code: Translational regulator CsrA (77 aa).

This sequence belongs to the CsrA/RsmA family. Homodimer; the beta-strands of each monomer intercalate to form a hydrophobic core, while the alpha-helices form wings that extend away from the core.

It localises to the cytoplasm. A translational regulator that binds mRNA to regulate translation initiation and/or mRNA stability. Usually binds in the 5'-UTR at or near the Shine-Dalgarno sequence preventing ribosome-binding, thus repressing translation. Its main target seems to be the major flagellin gene, while its function is anatagonized by FliW. This chain is Translational regulator CsrA, found in Pseudarthrobacter chlorophenolicus (strain ATCC 700700 / DSM 12829 / CIP 107037 / JCM 12360 / KCTC 9906 / NCIMB 13794 / A6) (Arthrobacter chlorophenolicus).